The chain runs to 290 residues: 4-hydroxy-tetrahydrodipicolinate synthase (290 aa).

A pyruvate-binding site is contributed by Thr44. Tyr132 acts as the Proton donor/acceptor in catalysis. Lys160 (schiff-base intermediate with substrate) is an active-site residue. Residue Ile202 coordinates pyruvate.

The protein belongs to the DapA family. Homotetramer; dimer of dimers.

Its subcellular location is the cytoplasm. It carries out the reaction L-aspartate 4-semialdehyde + pyruvate = (2S,4S)-4-hydroxy-2,3,4,5-tetrahydrodipicolinate + H2O + H(+). The protein operates within amino-acid biosynthesis; L-lysine biosynthesis via DAP pathway; (S)-tetrahydrodipicolinate from L-aspartate: step 3/4. Functionally, catalyzes the condensation of (S)-aspartate-beta-semialdehyde [(S)-ASA] and pyruvate to 4-hydroxy-tetrahydrodipicolinate (HTPA). The protein is 4-hydroxy-tetrahydrodipicolinate synthase of Geotalea uraniireducens (strain Rf4) (Geobacter uraniireducens).